The chain runs to 1340 residues: TSET complex member tstE (1340 aa).

Residues 56-67 (NQSQTSPNSNDG) are compositionally biased toward low complexity. Disordered regions lie at residues 56 to 75 (NQSQ…GSGG) and 110 to 131 (SGSG…GGGQ). WD repeat units lie at residues 208 to 246 (VNQI…VIGK), 250 to 294 (DPTE…LQTI), 345 to 384 (GHKK…SFLN), and 397 to 436 (IEHS…NPQE). Over residues 1216 to 1251 (KSHMSSTTTLRRSPSIENIRTTSTTFDSSKFNTDNQ) the composition is skewed to polar residues. Residues 1216–1340 (KSHMSSTTTL…TPTPTTTLSS (125 aa)) form a disordered region. Residues 1252 to 1275 (ELFDDDSDDDSDSGADADVDSENE) are compositionally biased toward acidic residues. Residues 1286–1318 (ASLQHNDNSSLTNITVTDNDSNLDQDITSNTGS) show a composition bias toward polar residues. Positions 1328-1340 (LSSTPTPTTTLSS) are enriched in low complexity.

Component of the TSET complex, a heterohexamer composed of tstA, tstB, tstC, tstD, tstE and tstF, which may act in plasma membrane turnover. tstA, tstB, tstC and tstD are likely to be the core complex members with tstE and tstF acting as associated scaffold proteins.

This chain is TSET complex member tstE, found in Dictyostelium discoideum (Social amoeba).